The following is a 300-amino-acid chain: tRNA-cytidine(32) 2-sulfurtransferase (300 aa).

The short motif at 57 to 62 (SGGKDS) is the PP-loop motif element. [4Fe-4S] cluster is bound by residues cysteine 132, cysteine 135, and cysteine 223.

This sequence belongs to the TtcA family. In terms of assembly, homodimer. It depends on Mg(2+) as a cofactor. The cofactor is [4Fe-4S] cluster.

The protein localises to the cytoplasm. It catalyses the reaction cytidine(32) in tRNA + S-sulfanyl-L-cysteinyl-[cysteine desulfurase] + AH2 + ATP = 2-thiocytidine(32) in tRNA + L-cysteinyl-[cysteine desulfurase] + A + AMP + diphosphate + H(+). The protein operates within tRNA modification. In terms of biological role, catalyzes the ATP-dependent 2-thiolation of cytidine in position 32 of tRNA, to form 2-thiocytidine (s(2)C32). The sulfur atoms are provided by the cysteine/cysteine desulfurase (IscS) system. This chain is tRNA-cytidine(32) 2-sulfurtransferase, found in Xanthomonas campestris pv. campestris (strain B100).